The following is a 430-amino-acid chain: Adenylosuccinate synthetase (430 aa).

GTP is bound by residues 13 to 19 (GDEGKGK) and 41 to 43 (GHT). Aspartate 14 functions as the Proton acceptor in the catalytic mechanism. Aspartate 14 and glycine 41 together coordinate Mg(2+). Residues 14-17 (DEGK), 39-42 (NAGH), threonine 130, arginine 144, glutamine 225, threonine 240, and arginine 304 each bind IMP. The active-site Proton donor is the histidine 42. 300-306 (ASTGRPR) is a substrate binding site. Residues arginine 306, 332-334 (KLD), and 414-416 (STG) each bind GTP.

The protein belongs to the adenylosuccinate synthetase family. As to quaternary structure, homodimer. It depends on Mg(2+) as a cofactor.

It is found in the cytoplasm. The catalysed reaction is IMP + L-aspartate + GTP = N(6)-(1,2-dicarboxyethyl)-AMP + GDP + phosphate + 2 H(+). The protein operates within purine metabolism; AMP biosynthesis via de novo pathway; AMP from IMP: step 1/2. In terms of biological role, plays an important role in the de novo pathway of purine nucleotide biosynthesis. Catalyzes the first committed step in the biosynthesis of AMP from IMP. This is Adenylosuccinate synthetase from Xanthomonas campestris pv. campestris (strain 8004).